Consider the following 1218-residue polypeptide: ATP-dependent helicase/deoxyribonuclease subunit B (1218 aa).

Positions 1-279 (MRFIVGRAGT…VFLTETHRFE (279 aa)) constitute a UvrD-like helicase ATP-binding domain. 6–13 (GRAGTGKS) contributes to the ATP binding site. The region spanning 281–588 (AGLKHLERFY…LVGSLDRSRN (308 aa)) is the UvrD-like helicase C-terminal domain. [4Fe-4S] cluster is bound at residue Cys786. The disordered stretch occupies residues 987 to 1006 (LAEGSKGSEGSEGSEDSEDS). 3 residues coordinate [4Fe-4S] cluster: Cys1126, Cys1129, and Cys1135. Polar residues predominate over residues 1160–1169 (RVQSQDSEQY). Residues 1160–1218 (RVQSQDSEQYPEQHPPTSVPGETSRRALQKDGGNSPRGQELIWLGEDEAGAGKEDDGHE) are disordered. The span at 1209–1218 (GAGKEDDGHE) shows a compositional bias: basic and acidic residues.

This sequence belongs to the helicase family. AddB/RexB type 1 subfamily. In terms of assembly, heterodimer of AddA and AddB. The cofactor is Mg(2+). [4Fe-4S] cluster serves as cofactor.

Its function is as follows. The heterodimer acts as both an ATP-dependent DNA helicase and an ATP-dependent, dual-direction single-stranded exonuclease. Recognizes the chi site generating a DNA molecule suitable for the initiation of homologous recombination. The AddB subunit has 5' -&gt; 3' nuclease activity but not helicase activity. In Desulfitobacterium hafniense (strain DSM 10664 / DCB-2), this protein is ATP-dependent helicase/deoxyribonuclease subunit B.